The chain runs to 173 residues: MFRRYADTLTSEGFIRIVIHAVGRMKAGPERELADRYLDRAAKAGPAIGMELAGVSEIPESRARSTLERKREEGRKLLDFAQGGALILLDERGKNLSSRELGDRFASFRDSGFRQIVMAIGGPDGHDDAVRAAADLSISFGAQTWPHQLVRVMLAEQLYRLITILSGHPYHRD.

The S-adenosyl-L-methionine site is built by Leu-89 and Gly-121.

The protein belongs to the RNA methyltransferase RlmH family. In terms of assembly, homodimer.

The protein localises to the cytoplasm. The enzyme catalyses pseudouridine(1915) in 23S rRNA + S-adenosyl-L-methionine = N(3)-methylpseudouridine(1915) in 23S rRNA + S-adenosyl-L-homocysteine + H(+). Its function is as follows. Specifically methylates the pseudouridine at position 1915 (m3Psi1915) in 23S rRNA. The chain is Ribosomal RNA large subunit methyltransferase H from Chelativorans sp. (strain BNC1).